We begin with the raw amino-acid sequence, 103 residues long: Large ribosomal subunit protein bL21 (103 aa).

This sequence belongs to the bacterial ribosomal protein bL21 family. Part of the 50S ribosomal subunit. Contacts protein L20.

Functionally, this protein binds to 23S rRNA in the presence of protein L20. The sequence is that of Large ribosomal subunit protein bL21 from Ruminiclostridium cellulolyticum (strain ATCC 35319 / DSM 5812 / JCM 6584 / H10) (Clostridium cellulolyticum).